The chain runs to 455 residues: Adhesin YadA (455 aa).

Positions 1-25 (MTKDFKISVSAALISALFSSPYAFA) are cleaved as a signal peptide. The surface exposed passenger domain stretch occupies residues 26–363 (DDYDGIPNLT…KKAIRESNQY (338 aa)). Residues 209–243 (VNVAQLKKEIEKTQENTNKRSAELLANANAYADNK) adopt a coiled-coil conformation. An outer membrane translocation of the passenger domain region spans residues 364-402 (TDHKFRQLDNRLDKLDTRVDKGLASSAALNSLFQPYGVG). Beta stranded transmembrane passes span 402 to 412 (GKVNFTAGVGG), 416 to 427 (SQALAIGSGYRV), 434 to 440 (KAGVAYA), and 444 to 455 (DVMYNASFNIEW). Residues 403-455 (KVNFTAGVGGYRSSQALAIGSGYRVNENVALKAGVAYAGSSDVMYNASFNIEW) form a translocator domain region.

Belongs to the autotransporter-2 (AT-2) (TC 1.B.40) family. As to quaternary structure, homotrimer; in gels migrates as monomers, dimers and homotrimers. Does not form trimers with distantly related EibA from E.coli; coexpression was lethal and one of the genes is eliminated in vivo. If the full translocator domain (368-455) is exchanged with that of EibA ('299-392'), will form heterotrimers with EibA and vice-versa.

It localises to the cell surface. The protein resides in the cell outer membrane. In terms of biological role, collagen-binding outer membrane protein forming a fibrillar matrix on the bacterial cell surface. Promotes initial attachment and invasion of eukaryotic cells. Also protects the bacteria by being responsible for agglutination, serum resistance, complement inactivation and phagocytosis resistance. In Yersinia enterocolitica, this protein is Adhesin YadA (yadA).